We begin with the raw amino-acid sequence, 158 residues long: Ribonuclease H (158 aa).

Residues 1-147 form the RNase H type-1 domain; sequence MKVTIYTDGA…CDVLATTAAD (147 aa). 4 residues coordinate Mg(2+): Asp-8, Glu-52, Asp-74, and Asp-139.

This sequence belongs to the RNase H family. Monomer. Requires Mg(2+) as cofactor.

It is found in the cytoplasm. The catalysed reaction is Endonucleolytic cleavage to 5'-phosphomonoester.. Endonuclease that specifically degrades the RNA of RNA-DNA hybrids. The polypeptide is Ribonuclease H (Lachnoclostridium phytofermentans (strain ATCC 700394 / DSM 18823 / ISDg) (Clostridium phytofermentans)).